The primary structure comprises 130 residues: Tripartite terminase subunit 2 (130 aa).

Belongs to the herpesviridae TRM2 protein family. In terms of assembly, associates with TRM1 and TRM3 to form the tripartite terminase complex.

The protein resides in the host nucleus. Component of the molecular motor that translocates viral genomic DNA in empty capsid during DNA packaging. Forms a tripartite terminase complex together with TRM1 and TRM3 in the host cytoplasm. Once the complex reaches the host nucleus, it interacts with the capsid portal vertex. This portal forms a ring in which genomic DNA is translocated into the capsid. This is Tripartite terminase subunit 2 from Homo sapiens (Human).